The chain runs to 497 residues: Cytochrome P450 71A20 (497 aa).

The chain crosses the membrane as a helical span at residues M3–K23. C440 serves as a coordination point for heme.

Belongs to the cytochrome P450 family. It depends on heme as a cofactor.

The protein resides in the membrane. This chain is Cytochrome P450 71A20 (CYP71A20), found in Arabidopsis thaliana (Mouse-ear cress).